A 1112-amino-acid polypeptide reads, in one-letter code: Cytosolic carboxypeptidase 4 (1112 aa).

The segment at 291 to 345 (TTEPPHDLPEEDFEDDGDDEVDKDSDTEDGKVEDDDLETDVNKLSSKPGLDRPEE) is disordered. A compositionally biased stretch (acidic residues) spans 299-329 (PEEDFEDDGDDEVDKDSDTEDGKVEDDDLET). The 291-residue stretch at 732–1022 (YPYTYTALMT…HPVDGLQGLQ (291 aa)) folds into the Peptidase M14 domain. Zn(2+)-binding residues include H804, E807, and H901. Residue E986 is the Proton donor/acceptor of the active site.

This sequence belongs to the peptidase M14 family. In terms of assembly, interacts with MYLK. Interacts with TCF4. The cofactor is Zn(2+). Expressed in corneal endothelium.

Its subcellular location is the cytoplasm. The protein resides in the cytosol. It catalyses the reaction (L-glutamyl)(n+1)-gamma-L-glutamyl-L-glutamyl-[protein] + H2O = (L-glutamyl)(n)-gamma-L-glutamyl-L-glutamyl-[protein] + L-glutamate. It carries out the reaction C-terminal L-alpha-aminoacyl-L-glutamyl-L-glutamyl-[tubulin] + H2O = C-terminal L-alpha-aminoacyl-L-glutamyl-[tubulin] + L-glutamate. Functionally, metallocarboxypeptidase that mediates deglutamylation of tubulin and non-tubulin target proteins. Catalyzes the removal of polyglutamate side chains present on the gamma-carboxyl group of glutamate residues within the C-terminal tail of tubulin protein. Specifically cleaves tubulin long-side-chains, while it is not able to remove the branching point glutamate. Also catalyzes the removal of polyglutamate residues from the carboxy-terminus of non-tubulin proteins such as MYLK. In Homo sapiens (Human), this protein is Cytosolic carboxypeptidase 4.